Consider the following 170-residue polypeptide: MAAPVMSAFGRLQGLIRTERSLLTHVQSRCIQTTSVCLKNRAARVRVGKGDKPVTYEAAHPPHYIAHRKGWLSQHTGNLDGEGGAAERTIEDVFIRRFIFGTFHGCLANEIVIKRRANLLIICAIFIRKMPTQKFYFLIGYTETLLSFLYKCPVKLEVQTVEEKVIYKYL.

Residues 1-30 constitute a mitochondrion transit peptide; that stretch reads MAAPVMSAFGRLQGLIRTERSLLTHVQSRC.

The protein belongs to the universal ribosomal protein uS3 family. In terms of assembly, component of the mitochondrial ribosome small subunit (28S) which comprises a 12S rRNA and about 30 distinct proteins.

Its subcellular location is the mitochondrion. The polypeptide is Small ribosomal subunit protein uS3mB (mrps24-b) (Xenopus laevis (African clawed frog)).